The primary structure comprises 448 residues: Adenylosuccinate synthetase (448 aa).

GTP contacts are provided by residues 22–28 (GDEGKGK) and 50–52 (GHT). Residue Asp23 is the Proton acceptor of the active site. Mg(2+)-binding residues include Asp23 and Gly50. IMP is bound by residues 23-26 (DEGK), 48-51 (NAGH), Thr139, Arg153, Gln234, Thr249, and Arg321. His51 acts as the Proton donor in catalysis. 317-323 (SVTGRPR) serves as a coordination point for substrate. GTP contacts are provided by residues Arg323, 349–351 (KLD), and 431–433 (STG).

Belongs to the adenylosuccinate synthetase family. Homodimer. It depends on Mg(2+) as a cofactor.

It is found in the cytoplasm. The enzyme catalyses IMP + L-aspartate + GTP = N(6)-(1,2-dicarboxyethyl)-AMP + GDP + phosphate + 2 H(+). It participates in purine metabolism; AMP biosynthesis via de novo pathway; AMP from IMP: step 1/2. Its function is as follows. Plays an important role in the de novo pathway of purine nucleotide biosynthesis. Catalyzes the first committed step in the biosynthesis of AMP from IMP. The chain is Adenylosuccinate synthetase from Burkholderia pseudomallei (strain 1106a).